Consider the following 222-residue polypeptide: MSRNIRNVLNMSDLPPQPNFSYELDLQNQGFFHIAGVDEVGRGPLAGPVVTAAVILSKDHSLDGLNDSKKLSVQKRNRLYCEILQSALAISIASICARAIDQSDIRKATLEAMRRCVMGLAVPAHYALIDGRDIPPHLPCPAKALVKGDQRSVSIAAASIVAKVTRDRMMEHAGQVYQGYGLEKHVGYATVAHRAAIAEYGPVIGLHRYSFALIKRYKEDIS.

The RNase H type-2 domain maps to 32-222 (FHIAGVDEVG…LIKRYKEDIS (191 aa)). The a divalent metal cation site is built by D38, E39, and D130.

Belongs to the RNase HII family. Requires Mn(2+) as cofactor. The cofactor is Mg(2+).

Its subcellular location is the cytoplasm. It catalyses the reaction Endonucleolytic cleavage to 5'-phosphomonoester.. Functionally, endonuclease that specifically degrades the RNA of RNA-DNA hybrids. The sequence is that of Ribonuclease HII from Bartonella bacilliformis (strain ATCC 35685 / KC583 / Herrer 020/F12,63).